We begin with the raw amino-acid sequence, 90 residues long: Small ribosomal subunit protein bS20 (90 aa).

The protein belongs to the bacterial ribosomal protein bS20 family.

Binds directly to 16S ribosomal RNA. This chain is Small ribosomal subunit protein bS20, found in Roseiflexus sp. (strain RS-1).